A 343-amino-acid polypeptide reads, in one-letter code: Ubiquitin carboxyl-terminal hydrolase isozyme L5 (343 aa).

Residues 6 to 218 (GWCTIESDPG…IRFNLMAVIK (213 aa)) form the UCH catalytic domain. C83 functions as the Nucleophile in the catalytic mechanism. The Proton donor role is filled by H157. A disordered region spans residues 242–266 (LSELNSGSGGDNKEESGGATPTTKE). The 29-residue stretch at 306–334 (NFTPLILNLIKGLAEKDNLQPLIQKAKDQ) folds into the ULD domain.

This sequence belongs to the peptidase C12 family. Component of the 19S (PA700) regulatory complex of the 26S proteasome.

The protein localises to the cytoplasm. The protein resides in the nucleus. The catalysed reaction is Thiol-dependent hydrolysis of ester, thioester, amide, peptide and isopeptide bonds formed by the C-terminal Gly of ubiquitin (a 76-residue protein attached to proteins as an intracellular targeting signal).. In terms of biological role, protease that specifically cleaves 'Lys-48'-linked polyubiquitin chains. Deubiquitinating enzyme associated with the 19S regulatory subunit of the 26S proteasome. This is Ubiquitin carboxyl-terminal hydrolase isozyme L5 (uch2) from Dictyostelium discoideum (Social amoeba).